Consider the following 78-residue polypeptide: MVQPDSSSLAEVLDRVLDKGVVVDVWARISLVGIEILTVEARVVAASVDTFLHYAEEIAKIEQAELTAGAEAAPTPEA.

Residues 9 to 19 form an alpha helix 1 region; it reads LAEVLDRVLDK. The segment at 23–31 is beta-strand 1; the sequence is VDVWARISL. Positions 32-34 are beta turn; that stretch reads VGI. The tract at residues 35 to 43 is beta-strand 2; the sequence is EILTVEARV. Residues 48–67 are alpha helix 2; it reads VDTFLHYAEEIAKIEQAELT.

It belongs to the gas vesicle GvpA family. The gas vesicle shell is 2 nm thick and consists of a single layer of this protein. It forms helical ribs nearly perpendicular to the long axis of the vesicle. Modeled as antiparallel homodimers.

It localises to the gas vesicle shell. Its function is as follows. Gas vesicles are hollow, gas filled proteinaceous nanostructures found in some microorganisms. During planktonic growth they allow positioning of the organism at a favorable depth for light or nutrient acquisition. GvpA forms the protein shell. This gene replaces p-gvpA of H.salinarum very poorly, only about 1% of GVs are formed; the few gas vesicles formed are quite strong with a very high critical collapse pressure (CCP) of 0.213 MPa. Expression of a 9.5 kb mc-vac DNA fragment containing 2 divergently transcribed regions (gvpD-gvpE-gvpF-gvpG-gvpH-gvpI-gvpJ-gvpK-gvpL-gvpM and gvpA-gvpC-gvpN-gvpO) allows H.volcanii to produce gas vesicles. This chain is Gas vesicle protein A, found in Haloferax mediterranei (strain ATCC 33500 / DSM 1411 / JCM 8866 / NBRC 14739 / NCIMB 2177 / R-4) (Halobacterium mediterranei).